A 772-amino-acid chain; its full sequence is Acetamidase regulatory protein (772 aa).

Residues 1 to 16 (MSSTAQKNSLSPTGNG) show a composition bias toward polar residues. A disordered region spans residues 1–23 (MSSTAQKNSLSPTGNGVTKRKSG). The zn(2)-C6 fungal-type DNA-binding region spans 26 to 59 (ACVHCHRRKVRCDARIVGLPCSNCRSSGKTDCRI). 3 disordered regions span residues 78 to 99 (RCRPPSTSEHVPEASPPSTISE), 114 to 148 (AAAPPASVAPNVQSKAQHLHSNSYSQTSPQAQECH), and 627 to 690 (ATSE…QTAV). Residues 114–123 (AAAPPASVAP) are compositionally biased toward low complexity. 2 stretches are compositionally biased toward polar residues: residues 124–144 (NVQSKAQHLHSNSYSQTSPQA) and 634–658 (PFSSTQDQPQAQALDQNKNQHQHSS). The span at 671 to 686 (LLPSYDSPTPDSTSLP) shows a compositional bias: low complexity.

Its subcellular location is the nucleus. Positively regulates the expression of genes involved in the catabolism of certain amides, omega amino acids, and lactams. This chain is Acetamidase regulatory protein (amdR), found in Aspergillus fumigatus (strain ATCC MYA-4609 / CBS 101355 / FGSC A1100 / Af293) (Neosartorya fumigata).